The chain runs to 155 residues: Small ribosomal subunit protein uS7 (155 aa).

Belongs to the universal ribosomal protein uS7 family. In terms of assembly, part of the 30S ribosomal subunit. Contacts proteins S9 and S11.

In terms of biological role, one of the primary rRNA binding proteins, it binds directly to 16S rRNA where it nucleates assembly of the head domain of the 30S subunit. Is located at the subunit interface close to the decoding center, probably blocks exit of the E-site tRNA. The chain is Small ribosomal subunit protein uS7 from Chlorobium limicola (strain DSM 245 / NBRC 103803 / 6330).